A 1384-amino-acid polypeptide reads, in one-letter code: Contactin-associated protein 1 (1384 aa).

Positions 1-19 are cleaved as a signal peptide; sequence MMHLRLFCILLAAVSGAEG. Residues 20-1283 are Extracellular-facing; sequence WGYYGCDEEL…PYYHDEGWVA (1264 aa). The region spanning 25-168 is the F5/8 type C domain; that stretch reads CDEELVGPLY…IGLRLGLYGC (144 aa). A disulfide bridge links cysteine 25 with cysteine 168. 3 N-linked (GlcNAc...) asparagine glycosylation sites follow: asparagine 120, asparagine 128, and asparagine 276. Laminin G-like domains are found at residues 203-355 and 389-538; these read FKTE…AFRC and FRTW…FDTC. Residues cysteine 323 and cysteine 355 are joined by a disulfide bond. Residues asparagine 420, asparagine 499, and asparagine 518 are each glycosylated (N-linked (GlcNAc...) asparagine). 4 disulfides stabilise this stretch: cysteine 506/cysteine 538, cysteine 544/cysteine 555, cysteine 549/cysteine 564, and cysteine 566/cysteine 576. One can recognise an EGF-like 1 domain in the interval 540–577; it reads ITDRCSPNMCEHDGRCYQSWDDFICYCELTGYKGETCH. The region spanning 576 to 795 is the Fibrinogen C-terminal domain; sequence CHTPLYKESC…NTISFHTGAA (220 aa). Asparagine 597, asparagine 653, asparagine 664, asparagine 763, asparagine 804, asparagine 843, asparagine 860, asparagine 948, and asparagine 956 each carry an N-linked (GlcNAc...) asparagine glycan. The 144-residue stretch at 813–956 folds into the Laminin G-like 3 domain; that stretch reads FRTSAPSGVF…ANASEGTSPN (144 aa). 4 disulfides stabilise this stretch: cysteine 930–cysteine 957, cysteine 961–cysteine 974, cysteine 968–cysteine 983, and cysteine 985–cysteine 995. In terms of domain architecture, EGF-like 2 spans 957-996; the sequence is CTGHCAHPRLPCFHGGRCVERYSYYTCDCDLTAFDGPYCN. Asparagine 1078 and asparagine 1147 each carry an N-linked (GlcNAc...) asparagine glycan. The Laminin G-like 4 domain occupies 1088 to 1250; it reads FSTSSAPAVL…VQGELSESNC (163 aa). The cysteines at positions 1209 and 1250 are disulfide-linked. A helical transmembrane segment spans residues 1284–1304; that stretch reads ILLGFLVAFLLLGLVGMLVLF. Residues 1305–1384 are Cytoplasmic-facing; sequence YLQNHRYKGS…PQILEESRSE (80 aa). The span at 1319–1328 shows a compositional bias: basic and acidic residues; sequence EPKAAHEYHP. The disordered stretch occupies residues 1319–1384; the sequence is EPKAAHEYHP…PQILEESRSE (66 aa). The SH3-binding motif lies at 1328–1369; sequence PGSKPPLPTSGPAQVPTPTAAPNQAPASAPAPAPTPAPAPGP. Residues 1339-1355 are compositionally biased toward low complexity; the sequence is PAQVPTPTAAPNQAPAS. Residues 1356-1368 show a composition bias toward pro residues; it reads APAPAPTPAPAPG. Position 1383 is a phosphoserine (serine 1383).

The protein belongs to the neurexin family. Interacts with CNTN1/contactin in cis form. In terms of tissue distribution, predominantly expressed in brain. Weak expression detected in ovary, pancreas, colon, lung, heart, intestine and testis.

The protein resides in the membrane. It is found in the cell junction. Its subcellular location is the paranodal septate junction. In terms of biological role, required, with CNTNAP2, for radial and longitudinal organization of myelinated axons. Plays a role in the formation of functional distinct domains critical for saltatory conduction of nerve impulses in myelinated nerve fibers. Demarcates the paranodal region of the axo-glial junction. In association with contactin involved in the signaling between axons and myelinating glial cells. This is Contactin-associated protein 1 (CNTNAP1) from Homo sapiens (Human).